Reading from the N-terminus, the 397-residue chain is MSSFIFPTYREVHSLQSTVSQLASNSGVKNKLANYGLNVSSVAWEDTSRYLNSCVGSNISDVTLKVNKSRMPIIRSNNFTDVTVDVPVSKLPKLVVGNHDGSQLKTVTLEEYLKDFHLYCGEFTRDRYNLFADRDQHVLTSSQACVLPLNSGEVEFAVDLYNYQSRNEPAVLVIVSTAYGTSAQVVCGGNTELYFNDNSVSRMFKAERIEDFRKSQGRSTSGPMTTEEKALNGIYIYQVPLVYKQERPNYESCFLGFVECDSLEASATFSNDSNNFFEHSARNSRGMSRAILSLGQEKGPYKGIKKTDGGIYKLERDQTKPIRLTVQFYMCTDTINLSDNNVEEISNQIRRIYDQGLNEGSLVVDSVTTKPGLHQPTQKRPTQTTSKPYINDEITML.

The disordered stretch occupies residues 368 to 391; sequence TTKPGLHQPTQKRPTQTTSKPYIN. The span at 375–388 shows a compositional bias: polar residues; that stretch reads QPTQKRPTQTTSKP.

This is an uncharacterized protein from Acanthamoeba polyphaga mimivirus (APMV).